Here is a 138-residue protein sequence, read N- to C-terminus: MRILGLDLGTKTLGVALSDEMGWTAQGIETIKINEAEGDYGLSRLSELIKDYTIDKIVLGFPKNMNGTVGPRGEASQTFAKVLETTYNVPVVLWDERLTTMAAEKMLIAADVSRQKRKKVIDKMAAVMILQGYLDSLN.

This sequence belongs to the YqgF nuclease family.

It is found in the cytoplasm. In terms of biological role, could be a nuclease involved in processing of the 5'-end of pre-16S rRNA. This chain is Putative pre-16S rRNA nuclease (yrrK), found in Bacillus subtilis (strain 168).